Here is a 168-residue protein sequence, read N- to C-terminus: DOMON domain-containing protein CBG21753 (168 aa).

Positions 1–17 are cleaved as a signal peptide; the sequence is MIKSMILVALILAFASA. Residues 25–143 form the DOMON domain; that stretch reads SGFQSYWRFA…CQKWRWIKSG (119 aa). N-linked (GlcNAc...) asparagine glycans are attached at residues N35 and N94. The interval 148-168 is disordered; the sequence is GQLTRNSKSPKDKKVCPMECN. The segment covering 156 to 168 has biased composition (basic and acidic residues); it reads SPKDKKVCPMECN.

The protein resides in the secreted. In Caenorhabditis briggsae, this protein is DOMON domain-containing protein CBG21753.